The sequence spans 159 residues: UPF0225 protein plu2503 (159 aa).

It belongs to the UPF0225 family.

The sequence is that of UPF0225 protein plu2503 from Photorhabdus laumondii subsp. laumondii (strain DSM 15139 / CIP 105565 / TT01) (Photorhabdus luminescens subsp. laumondii).